Here is a 243-residue protein sequence, read N- to C-terminus: 35 kDa gas vesicle protein (243 aa).

Belongs to the gas vesicle GvpC family.

The protein localises to the gas vesicle shell. In terms of biological role, may confer stability to the gas vesicle shells. Gas vesicles are small, hollow, gas filled protein structures that are found in several microbial planktonic microorganisms. They allow the positioning of the organism at the favorable depth for growth. The chain is 35 kDa gas vesicle protein from Dactylococcopsis salina (strain PCC 8305) (Myxobactron salinum).